The chain runs to 229 residues: Large ribosomal subunit protein uL1 (229 aa).

It belongs to the universal ribosomal protein uL1 family. Part of the 50S ribosomal subunit.

Functionally, binds directly to 23S rRNA. The L1 stalk is quite mobile in the ribosome, and is involved in E site tRNA release. Protein L1 is also a translational repressor protein, it controls the translation of the L11 operon by binding to its mRNA. The protein is Large ribosomal subunit protein uL1 of Rhodopseudomonas palustris (strain TIE-1).